The sequence spans 78 residues: uncharacterized protein (78 aa).

This is an uncharacterized protein from Escherichia coli (Bacteriophage T4).